The sequence spans 407 residues: Inhibin beta B chain (407 aa).

Positions 1–28 (MDGLPGRALGAACLLLLAAGWLGPEAWG) are cleaved as a signal peptide. A disordered region spans residues 26–62 (AWGSPTPPPTPAAPPPPPPPGSPGGSQDTCTSCGGFR). Positions 29–292 (SPTPPPTPAA…GDSRHRIRKR (264 aa)) are excised as a propeptide. Pro residues predominate over residues 30-47 (PTPPPTPAAPPPPPPPGS). A glycan (N-linked (GlcNAc...) asparagine) is linked at Asn93. 4 disulfides stabilise this stretch: Cys296–Cys304, Cys303–Cys372, Cys332–Cys404, and Cys336–Cys406.

It belongs to the TGF-beta family. In terms of assembly, dimeric, linked by one or more disulfide bonds. Inhibin B is a dimer of alpha and beta-B. Activin B is a homodimer of beta-B. Activin AB is a dimer of beta-A and beta-B. Interacts with FST and FSTL3. Activin B interacts with BMPR2.

Its subcellular location is the secreted. Its function is as follows. Inhibins and activins inhibit and activate, respectively, the secretion of follitropin by the pituitary gland. Inhibins/activins are involved in regulating a number of diverse functions such as hypothalamic and pituitary hormone secretion, gonadal hormone secretion, germ cell development and maturation, erythroid differentiation, insulin secretion, nerve cell survival, embryonic axial development or bone growth, depending on their subunit composition. Inhibins appear to oppose the functions of activins. In terms of biological role, activin B is a dimer of alpha and beta-B that plays a role in several essential biological processes including embryonic development, stem cell maintenance and differentiation, haematopoiesis, cell proliferation and wound healing. Signals through type I receptor ACVR1C, abundantly expressed in pancreatic beta cells, and type II receptors like ACVR2A or BMPR2. Upon ligand binding, these receptors phosphorylate intracellular signaling mediators SMAD2 and SMAD3, which form a complex with SMAD4, translocate to the nucleus, and regulate gene expression. Plays a crucial role in the induction of hepcidin by inflammation through activation of ACVR1C and subsequent phosphorylation of SMAD1/5/8. Regulates adipocyte lipid metabolism by decreasing non-esterified fatty acids and glycerol release and increases intracellular triglyceride content. Stimulates wound healing by promoting cell migration and hair follicle regeneration through the JNK and ERK signaling pathways downstream of RHOA. Inhibin B is a dimer of alpha and beta-B that plays a crucial role in the regulation of the reproductive system by inhibiting the secretion of follicle-stimulating hormone (FSH) from the anterior pituitary gland. Thereby, maintains reproductive homeostasis in both males and females. Acts as a more potent suppressor of FSH release than inhibin A. Functions as competitive receptor antagonist binding activin type II receptors with high affinity in the presence of the TGF-beta type III coreceptor/TGFBR3L. The polypeptide is Inhibin beta B chain (INHBB) (Homo sapiens (Human)).